Consider the following 145-residue polypeptide: Large ribosomal subunit protein uL13 (145 aa).

The protein belongs to the universal ribosomal protein uL13 family. As to quaternary structure, part of the 50S ribosomal subunit.

This protein is one of the early assembly proteins of the 50S ribosomal subunit, although it is not seen to bind rRNA by itself. It is important during the early stages of 50S assembly. This is Large ribosomal subunit protein uL13 from Macrococcus caseolyticus (strain JCSC5402) (Macrococcoides caseolyticum).